Here is a 708-residue protein sequence, read N- to C-terminus: G-box-binding factor (708 aa).

Disordered stretches follow at residues 1–29 (MLST…GSDL) and 123–339 (QQAQ…QTIP). Low complexity-rich tracts occupy residues 11-21 (SSSSSSSSSPS), 123-219 (QQAQ…QHHQ), and 227-316 (SQPQ…SPST). Residues 324–333 (ETSNSEKKDS) show a composition bias toward basic and acidic residues. 2 tandem repeats follow at residues 339–368 (PKCT…AFTP) and 481–510 (PPCP…PFTP). A disordered region spans residues 511–604 (VGAGLSPSSS…PTYSPNPSLP (94 aa)). Residues 516 to 590 (SPSSSPSSPK…SSISQSPLQL (75 aa)) are compositionally biased toward low complexity. The span at 591–600 (NYQTPTYSPN) shows a compositional bias: polar residues.

It is found in the nucleus. In terms of biological role, cAMP-responsive transcriptional activator regulating late gene expression. Essential component of the developmental switch between early and late development. Binds to a number of CA/GT-rich gene regulatory elements. This chain is G-box-binding factor (gbfA), found in Dictyostelium discoideum (Social amoeba).